Here is a 523-residue protein sequence, read N- to C-terminus: Dynein regulatory complex subunit 3 (523 aa).

LRR repeat units follow at residues 44–65, 66–87, 88–109, 110–131, and 132–153; these read DVLS…WQFE, NLRK…ENLA, HLVW…DTLV, NLED…DALV, and KLQV…IYLR. One can recognise an LRRCT domain in the interval 166 to 204; it reads NPISEAEDYKMFICAYLPDLMYLDYRRIDDHTKKLAEAK. 2 coiled-coil regions span residues 208–242 and 366–391; these read SIDE…AFVE and MTLE…VDMV.

Belongs to the DRC3 family. In terms of assembly, component of the nexin-dynein regulatory complex (N-DRC). Interacts with DRC1. Interacts with TCTE1/DRC5. Interacts with DRC7.

It localises to the cytoplasm. The protein resides in the cytoskeleton. Its subcellular location is the cilium axoneme. It is found in the cell projection. The protein localises to the cilium. It localises to the flagellum axoneme. The protein resides in the flagellum. In terms of biological role, component of the nexin-dynein regulatory complex (N-DRC) a key regulator of ciliary/flagellar motility which maintains the alignment and integrity of the distal axoneme and regulates microtubule sliding in motile axonemes. The protein is Dynein regulatory complex subunit 3 (DRC3) of Homo sapiens (Human).